The sequence spans 63 residues: Synergistic-type venom protein C9S3, chain 1 (63 aa).

Cystine bridges form between cysteine 3–cysteine 24, cysteine 17–cysteine 42, and cysteine 46–cysteine 57.

Belongs to the three-finger toxin family. Short-chain subfamily. Aminergic toxin sub-subfamily. In terms of assembly, heterodimer of C9S3 chain 1 and chain 2 (AC P01409); disulfide-linked. In terms of tissue distribution, expressed by the venom gland.

It localises to the secreted. Functionally, this protein shows a synergetic toxic effect in that it enhances the toxicity of other toxins. This chain is Synergistic-type venom protein C9S3, chain 1, found in Dendroaspis angusticeps (Eastern green mamba).